A 623-amino-acid polypeptide reads, in one-letter code: Serine/threonine-protein kinase ArnS (623 aa).

The next 2 membrane-spanning stretches (helical) occupy residues 13-33 (MILI…GIVL) and 49-69 (VYLI…QSLI). Residues 317–623 (YRVIEVIGLG…SYDIVKILEG (307 aa)) enclose the Protein kinase domain. Residues 323-331 (IGLGGNGYV) and K344 contribute to the ATP site. Catalysis depends on D460, which acts as the Proton acceptor.

This sequence belongs to the protein kinase superfamily. Ser/Thr protein kinase family. In terms of processing, autophosphorylated.

It localises to the cell membrane. It carries out the reaction L-seryl-[protein] + ATP = O-phospho-L-seryl-[protein] + ADP + H(+). The enzyme catalyses L-threonyl-[protein] + ATP = O-phospho-L-threonyl-[protein] + ADP + H(+). Autophosphorylation is stimulated by Mn(2+). Functionally, plays an essential role in the controlled expression of archaellum components during starvation-induced motility. May inhibit arnR transcription and promote ArnR translation. In Sulfolobus acidocaldarius (strain ATCC 33909 / DSM 639 / JCM 8929 / NBRC 15157 / NCIMB 11770), this protein is Serine/threonine-protein kinase ArnS.